The sequence spans 173 residues: Crossover junction endodeoxyribonuclease RuvC (173 aa).

Catalysis depends on residues Asp8, Glu67, and Asp139. Mg(2+)-binding residues include Asp8, Glu67, and Asp139.

It belongs to the RuvC family. In terms of assembly, homodimer which binds Holliday junction (HJ) DNA. The HJ becomes 2-fold symmetrical on binding to RuvC with unstacked arms; it has a different conformation from HJ DNA in complex with RuvA. In the full resolvosome a probable DNA-RuvA(4)-RuvB(12)-RuvC(2) complex forms which resolves the HJ. The cofactor is Mg(2+).

It is found in the cytoplasm. It carries out the reaction Endonucleolytic cleavage at a junction such as a reciprocal single-stranded crossover between two homologous DNA duplexes (Holliday junction).. Its function is as follows. The RuvA-RuvB-RuvC complex processes Holliday junction (HJ) DNA during genetic recombination and DNA repair. Endonuclease that resolves HJ intermediates. Cleaves cruciform DNA by making single-stranded nicks across the HJ at symmetrical positions within the homologous arms, yielding a 5'-phosphate and a 3'-hydroxyl group; requires a central core of homology in the junction. The consensus cleavage sequence is 5'-(A/T)TT(C/G)-3'. Cleavage occurs on the 3'-side of the TT dinucleotide at the point of strand exchange. HJ branch migration catalyzed by RuvA-RuvB allows RuvC to scan DNA until it finds its consensus sequence, where it cleaves and resolves the cruciform DNA. This is Crossover junction endodeoxyribonuclease RuvC from Enterobacter sp. (strain 638).